A 115-amino-acid chain; its full sequence is Large ribosomal subunit protein bL20 (115 aa).

It belongs to the bacterial ribosomal protein bL20 family.

In terms of biological role, binds directly to 23S ribosomal RNA and is necessary for the in vitro assembly process of the 50S ribosomal subunit. It is not involved in the protein synthesizing functions of that subunit. The sequence is that of Large ribosomal subunit protein bL20 from Prochlorococcus marinus subsp. pastoris (strain CCMP1986 / NIES-2087 / MED4).